Consider the following 131-residue polypeptide: Probable ATP synthase subunit g 1, mitochondrial (131 aa).

Belongs to the ATPase g subunit family. In terms of assembly, subunit of the F-type ATPase which has 2 components, CF(1) - the catalytic core - and CF(0) - the membrane proton channel.

The protein localises to the mitochondrion membrane. Mitochondrial membrane ATP synthase (F(1)F(0) ATP synthase or Complex V) produces ATP from ADP in the presence of a proton gradient across the membrane which is generated by electron transport complexes of the respiratory chain. F-type ATPases consist of two structural domains, F(1) - containing the extramembraneous catalytic core, and F(0) - containing the membrane proton channel, linked together by a central stalk and a peripheral stalk. During catalysis, ATP synthesis in the catalytic domain of F(1) is coupled via a rotary mechanism of the central stalk subunits to proton translocation. Part of the complex F(0) domain. Minor subunit located with subunit a in the membrane. This Caenorhabditis elegans protein is Probable ATP synthase subunit g 1, mitochondrial.